Consider the following 250-residue polypeptide: tRNA (guanine-N(1)-)-methyltransferase (250 aa).

S-adenosyl-L-methionine is bound by residues Gly116 and 136-141; that span reads IGDYVL.

The protein belongs to the RNA methyltransferase TrmD family. As to quaternary structure, homodimer.

Its subcellular location is the cytoplasm. It carries out the reaction guanosine(37) in tRNA + S-adenosyl-L-methionine = N(1)-methylguanosine(37) in tRNA + S-adenosyl-L-homocysteine + H(+). In terms of biological role, specifically methylates guanosine-37 in various tRNAs. The chain is tRNA (guanine-N(1)-)-methyltransferase from Pseudomonas putida (strain ATCC 700007 / DSM 6899 / JCM 31910 / BCRC 17059 / LMG 24140 / F1).